Reading from the N-terminus, the 595-residue chain is MTMTLHTKASGMALLHQIQANELEPLNRPQLKIPLERPLGEVYVDSSKPAVYNYPEGAAYDFNAAAAASAPVYGQSGLAYGPGSEAAAFGANGLGGFQPLNSVSPSPLVLLHPPPQLSPFLHPHGQQVPYYLENEPSGYAVREAGPPAFYRPNSDNRRQGGRERLASTSDKGSMAMESAKETRYCAVCNDYASGYHYGVWSCEGCKAFFKRSIQGHNDYMCPATNQCTIDKNRRKSCQACRLRKCYEVGMMKGGIRKDRRGGRMLKHKRQRDDGEGRNEAVPPGDMRSANLWPSPLLIKHTKKNSPVLSLTADQMISALLEAEPPIIYSEYDPTRPLSEASMMGLLTNLADRELVHMINWAKRVPGFLDLSLHDQVHLLECAWLEILMIGLVWRSMEHPGKLLFAPNLLLDRNQGKCVEGMVEIFDMLLATSSRFRMMNLQGEEFVCLKSIILLNSGVYTFLSSTLKSLEEKDHIHRVLDKITDTLIHLMAKAGLTLQQQHRRLAQLLLILSHFRHMSNKGMEHLYNMKCKNVVPLYDLLLEMLDAHRLHAPTNLGGPPPEDMSQSQLATSGSTPSHSLQMYYITGEAENFPTTI.

The tract at residues 1-184 (MTMTLHTKAS…AMESAKETRY (184 aa)) is modulating (transactivation AF-1); mediates interaction with MACROD1. A glycan (O-linked (GlcNAc) serine) is linked at Ser10. The segment at 35–47 (LERPLGEVYVDSS) is required for interaction with NCOA1. The tract at residues 35–174 (LERPLGEVYV…LASTSDKGSM (140 aa)) is interaction with DDX5; self-association. Phosphoserine; by CDK2 occurs at positions 104 and 106. Ser118 carries the post-translational modification Phosphoserine. The tract at residues 144-174 (AGPPAFYRPNSDNRRQGGRERLASTSDKGSM) is disordered. Positions 154-165 (SDNRRQGGRERL) are enriched in basic and acidic residues. The residue at position 167 (Ser167) is a Phosphoserine; by CK2. NR C4-type zinc fingers lie at residues 185-205 (CAVCNDYASGYHYGVWSCEGC) and 221-245 (CPATNQCTIDKNRRKSCQACRLRKC). A DNA-binding region (nuclear receptor) is located at residues 185–250 (CAVCNDYASG…RLRKCYEVGM (66 aa)). The tract at residues 185–310 (CAVCNDYASG…TKKNSPVLSL (126 aa)) is mediates interaction with DNTTIP2. The tract at residues 251–310 (MKGGIRKDRRGGRMLKHKRQRDDGEGRNEAVPPGDMRSANLWPSPLLIKHTKKNSPVLSL) is hinge. Residues 257-269 (KDRRGGRMLKHKR) are compositionally biased toward basic residues. A disordered region spans residues 257 to 288 (KDRRGGRMLKHKRQRDDGEGRNEAVPPGDMRS). Residue Arg260 is modified to Asymmetric dimethylarginine; by PRMT1. The segment at 262–595 (GRMLKHKRQR…GEAENFPTTI (334 aa)) is interaction with AKAP13. Residues 264-594 (MLKHKRQRDD…TGEAENFPTT (331 aa)) are self-association. The NR LBD domain maps to 311 to 547 (TADQMISALL…DLLLEMLDAH (237 aa)). Residues 311-594 (TADQMISALL…TGEAENFPTT (284 aa)) are transactivation AF-2. 2 residues coordinate 17beta-estradiol: Glu353 and Arg394. The S-palmitoyl cysteine moiety is linked to residue Cys447. Residue His524 participates in 17beta-estradiol binding. A Phosphotyrosine; by Tyr-kinases modification is found at Tyr537. The tract at residues 551–575 (APTNLGGPPPEDMSQSQLATSGSTP) is disordered. Residues 563–575 (MSQSQLATSGSTP) are compositionally biased toward polar residues.

Belongs to the nuclear hormone receptor family. NR3 subfamily. As to quaternary structure, binds DNA as a homodimer. Can form a heterodimer with ESR2. Interacts with coactivator NCOA5. Interacts with PELP1, the interaction is enhanced by 17-beta-estradiol; the interaction increases ESR1 transcriptional activity. Interacts with NCOA7; the interaction is ligand-inducible. Interacts with AKAP13, CUEDC2, HEXIM1, KDM5A, MAP1S, SMARD1, and UBE1C. Interacts with MUC1; the interaction is stimulated by 7 beta-estradiol (E2) and enhances ESR1-mediated transcription. Interacts with DNTTIP2, and UIMC1. Interacts with KMT2D/MLL2. Interacts with ATAD2; the interaction is enhanced by estradiol. Interacts with KIF18A and LDB1. Interacts with RLIM (via its C-terminus). Interacts with MACROD1. Interacts with SH2D4A and PLCG. Interacts with SH2D4A; the interaction blocks binding to PLCG and inhibits estrogen-induced cell proliferation. Interacts with DYNLL1. Interacts with CCDC62; the interaction requires estradiol and appears to enhance the transcription of target genes. Interacts with NR2C1; the interaction prevents homodimerization of ESR1 and suppresses its transcriptional activity and cell growth. Interacts with DNAAF4. Interacts with PRMT2. Interacts with RBFOX2. Interacts with EP300; the interaction is estrogen-dependent and enhanced by CITED1. Interacts with CITED1; the interaction is estrogen-dependent. Interacts with FAM120B, FOXL2, PHB2 and SLC30A9. Interacts with coactivators NCOA3 and NCOA6. Interacts with STK3/MST2 only in the presence of SAV1 and vice-versa. Binds to CSNK1D. Interacts with NCOA2; NCOA2 can interact with ESR1 AF-1 and AF-2 domains simultaneously and mediate their transcriptional synergy. Interacts with DDX5. Interacts with NCOA1; the interaction seems to require a self-association of N-terminal and C-terminal regions. Interacts with ZNF366, DDX17, NFKB1, RELA, SP1 and SP3. Interacts with NRIP1. Interacts with GPER1; the interaction occurs in an estrogen-dependent manner. Interacts with CLOCK and the interaction is stimulated by estrogen. Interacts with TRIP4 (ufmylated); estrogen dependent. Interacts with LMTK3; the interaction phosphorylates ESR1 (in vitro) and protects it against proteasomal degradation. Interacts with CCAR2 (via N-terminus) in a ligand-independent manner. Interacts with ZFHX3. Interacts with SFR1 in a ligand-dependent and -independent manner. Interacts with DCAF13, LATS1 and DCAF1; regulates ESR1 ubiquitination and ubiquitin-mediated proteasomal degradation. Interacts (via DNA-binding domain) with POU4F2 (C-terminus); this interaction increases the estrogen receptor ESR1 transcriptional activity in a DNA- and ligand 17-beta-estradiol-independent manner. Interacts with ESRRB isoform 1. Interacts with UBE3A and WBP2. Interacts with GTF2B. Interacts with RBM39. In the absence of hormonal ligand, interacts with TACC1. Interacts with PI3KR1 or PI3KR2 and PTK2/FAK1. Interacts with SRC. Interacts with BAG1; the interaction is promoted in the absence of estradiol (17-beta-estradiol/E2). Interacts with and ubiquitinated by STUB1; the interaction is promoted in the absence of estradiol (17-beta-estradiol/E2). Interacts with NEDD8. Post-translationally, phosphorylated by cyclin A/CDK2 and CK1. Phosphorylation probably enhances transcriptional activity. Dephosphorylation at Ser-118 by PPP5C inhibits its transactivation activity. Phosphorylated by LMTK3 (in vitro). Ubiquitinated; regulated by LATS1 via DCAF1 it leads to ESR1 proteasomal degradation. Deubiquitinated by OTUB1. Ubiquitinated by STUB1/CHIP; in the CA1 hippocampal region following loss of endogenous circulating estradiol (17-beta-estradiol/E2). Ubiquitinated by UBR5, leading to its degradation: UBR5 specifically recognizes and binds ligand-bound ESR1 when it is not associated with coactivators (NCOAs). In presence of NCOAs, the UBR5-degron is not accessible, preventing its ubiquitination and degradation. In terms of processing, palmitoylated at Cys-447 by ZDHHC7 and ZDHHC21. Palmitoylation is required for plasma membrane targeting and for rapid intracellular signaling via ERK and AKT kinases and cAMP generation, but not for signaling mediated by the nuclear hormone receptor. Post-translationally, dimethylated by PRMT1 at Arg-260. The methylation may favor cytoplasmic localization. Demethylated by JMJD6 at Arg-260.

Its subcellular location is the nucleus. The protein resides in the cytoplasm. The protein localises to the golgi apparatus. It is found in the cell membrane. Functionally, nuclear hormone receptor. The steroid hormones and their receptors are involved in the regulation of eukaryotic gene expression and affect cellular proliferation and differentiation in target tissues. Ligand-dependent nuclear transactivation involves either direct homodimer binding to a palindromic estrogen response element (ERE) sequence or association with other DNA-binding transcription factors, such as AP-1/c-Jun, c-Fos, ATF-2, Sp1 and Sp3, to mediate ERE-independent signaling. Ligand binding induces a conformational change allowing subsequent or combinatorial association with multiprotein coactivator complexes through LXXLL motifs of their respective components. Mutual transrepression occurs between the estrogen receptor (ER) and NF-kappa-B in a cell-type specific manner. Decreases NF-kappa-B DNA-binding activity and inhibits NF-kappa-B-mediated transcription from the IL6 promoter and displace RELA/p65 and associated coregulators from the promoter. Recruited to the NF-kappa-B response element of the CCL2 and IL8 promoters and can displace CREBBP. Present with NF-kappa-B components RELA/p65 and NFKB1/p50 on ERE sequences. Can also act synergistically with NF-kappa-B to activate transcription involving respective recruitment adjacent response elements; the function involves CREBBP. Can activate the transcriptional activity of TFF1. Also mediates membrane-initiated estrogen signaling involving various kinase cascades. Essential for MTA1-mediated transcriptional regulation of BRCA1 and BCAS3. Maintains neuronal survival in response to ischemic reperfusion injury when in the presence of circulating estradiol (17-beta-estradiol/E2). This chain is Estrogen receptor (ESR1), found in Sus scrofa (Pig).